We begin with the raw amino-acid sequence, 378 residues long: Interleukin-3 receptor subunit alpha (378 aa).

Residues 1–18 (MVLLWLTLLLIALPCLLQ) form the signal peptide. Residues 19 to 305 (TKEDPNPPIT…EEGANTRAWR (287 aa)) lie on the Extracellular side of the membrane. Residues Asn46, Asn64, Asn80, and Asn109 are each glycosylated (N-linked (GlcNAc...) asparagine). 4 disulfides stabilise this stretch: Cys52-Cys68, Cys76-Cys195, Cys112-Cys122, and Cys151-Cys165. N-linked (GlcNAc...) asparagine glycans are attached at residues Asn212 and Asn218. A disulfide bridge connects residues Cys217 and Cys293. The WSXWS motif signature appears at 282–286 (LSAWS). Residues 306–325 (TSLLIALGTLLALVCVFVIC) form a helical membrane-spanning segment. Over 326-378 (RRYLVMQRLFPRIPHMKDPIGDSFQNDKLVVWEAGKAGLEECLVTEVQVVQKT) the chain is Cytoplasmic. The short motif at 334 to 342 (LFPRIPHMK) is the Box 1 motif element.

The protein belongs to the type I cytokine receptor family. Type 5 subfamily. Interacts with IL3. Heterodimer of an alpha and a beta subunit. The beta subunit is common to the IL3, IL5 and GM-CSF receptors. In terms of processing, ubiquitinated by RNFT2 in response to IL3. Ubiquitination leads ligand-induced degradation by the proteasome. Ubiquitinated by RNF128 via 'Lys-27'-linked polyubiquitination, facilitating its degradation through the lysosomal pathway.

The protein localises to the cell membrane. Functionally, cell surface receptor for IL3 expressed on hematopoietic progenitor cells, monocytes and B-lymphocytes that controls the production and differentiation of hematopoietic progenitor cells into lineage-restricted cells. Ligand stimulation rapidly induces hetrodimerization with IL3RB, phosphorylation and enzyme activity of effector proteins such as JAK2 and PI3K that play a role in signaling cell proliferation and differentiation. Activation of JAK2 leads to STAT5-mediated transcriptional program. The chain is Interleukin-3 receptor subunit alpha from Homo sapiens (Human).